The sequence spans 729 residues: Phenylalanine ammonia-lyase (729 aa).

Residue tyrosine 77 is the Proton donor/acceptor of the active site. A cross-link (5-imidazolinone (Ala-Gly)) is located at residues 182-184 (ASG). Serine 183 is subject to 2,3-didehydroalanine (Ser). Residues asparagine 241, glutamine 336, arginine 342, asparagine 372, lysine 443, glutamate 471, and asparagine 474 each coordinate (E)-cinnamate.

The protein belongs to the PAL/histidase family. Post-translationally, contains an active site 4-methylidene-imidazol-5-one (MIO), which is formed autocatalytically by cyclization and dehydration of residues Ala-Ser-Gly.

It is found in the cytoplasm. The enzyme catalyses L-phenylalanine = (E)-cinnamate + NH4(+). It functions in the pathway secondary metabolite biosynthesis. The protein operates within phenylpropanoid metabolism; trans-cinnamate biosynthesis; trans-cinnamate from L-phenylalanine: step 1/1. Functionally, phenylalanine ammonia-lyase; part of the gene cluster that mediates the biosynthesis of squalestatin S1 (SQS1, also known as zaragozic acid A), a heavily oxidized fungal polyketide that offers potent cholesterol lowering activity by targeting squalene synthase (SS). SQS1 is composed of a 2,8-dioxobicyclic[3.2.1]octane-3,4,5-tricarboxyclic acid core that is connected to two lipophilic polyketide arms. These initial steps feature the priming of an unusual benzoic acid starter unit onto the highly reducing polyketide synthase pks2, followed by oxaloacetate extension and product release to generate a tricarboxylic acid containing product. The phenylalanine ammonia lyase (PAL) M7 and the acyl-CoA ligase M9 are involved in transforming phenylalanine into benzoyl-CoA. The citrate synthase-like protein R3 is involved in connecting the C-alpha-carbons of the hexaketide chain and oxaloacetate to afford the tricarboxylic acid unit. The potential hydrolytic enzymes, M8 and M10, are in close proximity to pks2 and may participate in product release. On the other side, the tetraketide arm is synthesized by a the squalestatin tetraketide synthase pks1 and enzymatically esterified to the core in the last biosynthetic step, by the acetyltransferase M4. The biosynthesis of the tetraketide must involve 3 rounds of chain extension. After the first and second rounds methyl-transfer occurs, and in all rounds of extension the ketoreductase and dehydratase are active. The enoyl reductase and C-MeT of pks1 are not active in the final round of extension. The acetyltransferase M4 appears to have a broad substrate selectivity for its acyl CoA substrate, allowing the in vitro synthesis of novel squalestatins. The biosynthesis of SQS1 requires several oxidative steps likely performed by oxidoreductases M1, R1 and R2. Finally, in support of the identification of the cluster as being responsible for SQS1 production, the cluster contains a gene encoding a putative squalene synthase (SS) R6, suggesting a likely mechanism for self-resistance. The protein is Phenylalanine ammonia-lyase of Phoma sp. (strain ATCC 20986 / MF5453).